We begin with the raw amino-acid sequence, 309 residues long: Probable cell division protein WhiA (309 aa).

A DNA-binding region (H-T-H motif) is located at residues 275-309; the sequence is SLKELGELVPGGPISKSGINHRLRKINQYAEKLRA.

The protein belongs to the WhiA family.

Involved in cell division and chromosome segregation. In Pediococcus pentosaceus (strain ATCC 25745 / CCUG 21536 / LMG 10740 / 183-1w), this protein is Probable cell division protein WhiA.